Consider the following 279-residue polypeptide: Expansin-A22 (279 aa).

The N-terminal stretch at 1-27 (MKLLEKMIYVEFLMIIMVIWVVPMSYG) is a signal peptide. In terms of domain architecture, Expansin-like EG45 spans 76 to 186 (QGACGYGNLF…RRIPCSKTGG (111 aa)). The region spanning 196 to 275 (YFLMVLIYNV…NWGFGQTFDG (80 aa)) is the Expansin-like CBD domain.

This sequence belongs to the expansin family. Expansin A subfamily.

It localises to the secreted. It is found in the cell wall. Its subcellular location is the membrane. Functionally, causes loosening and extension of plant cell walls by disrupting non-covalent bonding between cellulose microfibrils and matrix glucans. No enzymatic activity has been found. The sequence is that of Expansin-A22 (EXPA22) from Arabidopsis thaliana (Mouse-ear cress).